The primary structure comprises 186 residues: Zinc finger AN1 domain-containing stress-associated protein 12 (186 aa).

2 AN1-type zinc fingers span residues 10 to 58 and 97 to 147; these read PDLG…HGSR and KKKK…INTA. 16 residues coordinate Zn(2+): cysteine 16, cysteine 21, cysteine 31, cysteine 34, cysteine 39, histidine 42, histidine 48, cysteine 50, cysteine 103, cysteine 108, cysteine 120, cysteine 123, cysteine 128, histidine 131, histidine 137, and cysteine 139. Residues 167–186 are disordered; sequence KGCGRGSSVSSKSSPSVRSF. Residues 172-186 show a composition bias toward low complexity; that stretch reads GSSVSSKSSPSVRSF.

In terms of biological role, may be involved in environmental stress response. In Arabidopsis thaliana (Mouse-ear cress), this protein is Zinc finger AN1 domain-containing stress-associated protein 12 (SAP12).